The chain runs to 248 residues: uncharacterized protein (248 aa).

This sequence belongs to the glycosyltransferase 2 family.

This is an uncharacterized protein from Acanthamoeba polyphaga (Amoeba).